The following is a 147-amino-acid chain: Hemoglobin subunit gamma (147 aa).

One can recognise a Globin domain in the interval 3-147 (HFTVEEKAVI…VAIALAHKYH (145 aa)). The heme b site is built by histidine 64 and histidine 93.

Belongs to the globin family. Heterotetramer of two alpha chains and two gamma chains in fetal hemoglobin (Hb F). As to expression, red blood cells.

Its function is as follows. Gamma chains make up the fetal hemoglobin F, in combination with alpha chains. The sequence is that of Hemoglobin subunit gamma (HBG) from Cheirogaleus medius (Fat-tailed dwarf lemur).